The sequence spans 454 residues: Ribosomal protein uS12 methylthiotransferase RimO (454 aa).

Residues 19-129 (AKVGFVSLGC…VLAQVHEHVA (111 aa)) form the MTTase N-terminal domain. [4Fe-4S] cluster contacts are provided by Cys-28, Cys-64, Cys-93, Cys-161, Cys-165, and Cys-168. Positions 147–384 (LTPKHYAYLK…MAVQAKISSD (238 aa)) constitute a Radical SAM core domain. The TRAM domain maps to 387-453 (QVRIGQEYLI…EHDVWGVRVE (67 aa)).

The protein belongs to the methylthiotransferase family. RimO subfamily. The cofactor is [4Fe-4S] cluster.

It localises to the cytoplasm. The enzyme catalyses L-aspartate(89)-[ribosomal protein uS12]-hydrogen + (sulfur carrier)-SH + AH2 + 2 S-adenosyl-L-methionine = 3-methylsulfanyl-L-aspartate(89)-[ribosomal protein uS12]-hydrogen + (sulfur carrier)-H + 5'-deoxyadenosine + L-methionine + A + S-adenosyl-L-homocysteine + 2 H(+). In terms of biological role, catalyzes the methylthiolation of an aspartic acid residue of ribosomal protein uS12. The polypeptide is Ribosomal protein uS12 methylthiotransferase RimO (Colwellia psychrerythraea (strain 34H / ATCC BAA-681) (Vibrio psychroerythus)).